The primary structure comprises 375 residues: Queuine tRNA-ribosyltransferase (375 aa).

The active-site Proton acceptor is the D89. Residues 89–93 (DSGGF), D143, Q187, and G214 contribute to the substrate site. Residues 245–251 (GVGKPED) are RNA binding. D264 (nucleophile) is an active-site residue. The tract at residues 269–273 (TRNAR) is RNA binding; important for wobble base 34 recognition. Zn(2+) is bound by residues C302, C304, C307, and H333.

It belongs to the queuine tRNA-ribosyltransferase family. In terms of assembly, homodimer. Within each dimer, one monomer is responsible for RNA recognition and catalysis, while the other monomer binds to the replacement base PreQ1. Zn(2+) serves as cofactor.

The catalysed reaction is 7-aminomethyl-7-carbaguanine + guanosine(34) in tRNA = 7-aminomethyl-7-carbaguanosine(34) in tRNA + guanine. It participates in tRNA modification; tRNA-queuosine biosynthesis. In terms of biological role, catalyzes the base-exchange of a guanine (G) residue with the queuine precursor 7-aminomethyl-7-deazaguanine (PreQ1) at position 34 (anticodon wobble position) in tRNAs with GU(N) anticodons (tRNA-Asp, -Asn, -His and -Tyr). Catalysis occurs through a double-displacement mechanism. The nucleophile active site attacks the C1' of nucleotide 34 to detach the guanine base from the RNA, forming a covalent enzyme-RNA intermediate. The proton acceptor active site deprotonates the incoming PreQ1, allowing a nucleophilic attack on the C1' of the ribose to form the product. After dissociation, two additional enzymatic reactions on the tRNA convert PreQ1 to queuine (Q), resulting in the hypermodified nucleoside queuosine (7-(((4,5-cis-dihydroxy-2-cyclopenten-1-yl)amino)methyl)-7-deazaguanosine). In Shigella flexneri serotype 5b (strain 8401), this protein is Queuine tRNA-ribosyltransferase.